Here is a 945-residue protein sequence, read N- to C-terminus: MSNKKADSKPQAKYPVNLLDTPFPMRGDLPKREPQWVKEWEERGIYEKIRAASKGRPKFILHDGPPYANGDIHLGHAVNKILKDIVVKSRNMAGFDAPYVPGWDCHGMPIEIQIEKQFGKSLPAAEVMSKARAYATEQIEKQKVGFKRLGVLGDWANPYKTMNFVNEAEEIRALGKIIEKGYVYRGLKPVNWCFDCGSALAEAEVEYKDRTDPTIDVMFAFAEPEKTAQAFGLPALPRAEGGIVIWTTTPWTIPANQALNLHPEIVYALVDTERGLLIIAEERVAACMADFKLTGRVVATAPGVKLANLRFHHPLASAHPGYKRTAPVYLGDYVTTDTGTGVVHSSPAYGIEDFMSCKAHGMTDSDFINPVMGDGRYIESLPLFGGLSIWDANPKIVDALNAAGSLLRSEKYTHSYMHCWRHKTPIIYRATSQWFAGMDVTPRDDGKTLREAALEGVEATAFYPSWGKQRLFSMIANRPDWTLSRQRQWGVPMAFFVHKETGELHPRTLELLEEVAKRVEQSGIEAWQSLDPRELIGDDANMYEKNRDTLDVWFDSGTTHWHVLRGSHKDQLQFPADLYLEGSDQHRGWFHSSLLTASMIDGRAPYKGLLTHGFTVDGEGRKMSKSLGNGVDPHEVANRLGAEIIRLWIASTDYSGELAISEEILKRVTEGYRRIRNTLRFLLANLSDFDFAQHAVPVDEWLEIDRYAVAFSAQLQTELLGHYEKYEFHPVVAKLQTYCSEDLGGFYLDVLKDRLYTSAADSRARRSAQTALYHLTHGLLRVLAPFLSFTAEEAWKVFQPASDTVFTETYYAYPEVAGSAALIEKWALLRDVRGNVTKALEEARTANRIGSSLQAEVAVHASGARYDALTSLGDDLKFVLITSAATVVKVDDEAQESVDVAASKYQKCERCWHYREDVGAHADHPTLCGRCFSNLFENGEIRSAA.

Positions 66–76 (PYANGDIHLGH) match the 'HIGH' region motif. An L-isoleucyl-5'-AMP-binding site is contributed by E581. Residues 622-626 (KMSKS) carry the 'KMSKS' region motif. Position 625 (K625) interacts with ATP. Zn(2+) is bound by residues C908, C911, C928, and C931.

The protein belongs to the class-I aminoacyl-tRNA synthetase family. IleS type 1 subfamily. As to quaternary structure, monomer. It depends on Zn(2+) as a cofactor.

Its subcellular location is the cytoplasm. The catalysed reaction is tRNA(Ile) + L-isoleucine + ATP = L-isoleucyl-tRNA(Ile) + AMP + diphosphate. Its function is as follows. Catalyzes the attachment of isoleucine to tRNA(Ile). As IleRS can inadvertently accommodate and process structurally similar amino acids such as valine, to avoid such errors it has two additional distinct tRNA(Ile)-dependent editing activities. One activity is designated as 'pretransfer' editing and involves the hydrolysis of activated Val-AMP. The other activity is designated 'posttransfer' editing and involves deacylation of mischarged Val-tRNA(Ile). The chain is Isoleucine--tRNA ligase from Burkholderia ambifaria (strain ATCC BAA-244 / DSM 16087 / CCUG 44356 / LMG 19182 / AMMD) (Burkholderia cepacia (strain AMMD)).